The chain runs to 180 residues: Negative modulator of initiation of replication (180 aa).

Interaction with DNA stretches follow at residues 86 to 87 (AV), 115 to 119 (RTRVY), and 149 to 155 (NTNTGRK).

Belongs to the SeqA family. As to quaternary structure, homodimer. Polymerizes to form helical filaments.

The protein resides in the cytoplasm. Functionally, negative regulator of replication initiation, which contributes to regulation of DNA replication and ensures that replication initiation occurs exactly once per chromosome per cell cycle. Binds to pairs of hemimethylated GATC sequences in the oriC region, thus preventing assembly of replication proteins and re-initiation at newly replicated origins. Repression is relieved when the region becomes fully methylated. In Salmonella typhimurium (strain LT2 / SGSC1412 / ATCC 700720), this protein is Negative modulator of initiation of replication.